The following is a 275-amino-acid chain: Elongation factor Ts (275 aa).

The involved in Mg(2+) ion dislocation from EF-Tu stretch occupies residues 76 to 79; sequence TDFV.

It belongs to the EF-Ts family.

It localises to the cytoplasm. Associates with the EF-Tu.GDP complex and induces the exchange of GDP to GTP. It remains bound to the aminoacyl-tRNA.EF-Tu.GTP complex up to the GTP hydrolysis stage on the ribosome. The chain is Elongation factor Ts from Rhodococcus jostii (strain RHA1).